A 678-amino-acid polypeptide reads, in one-letter code: Vitrin (678 aa).

The N-terminal stretch at 1–26 (MRTVVLTMKASVIEMFLVLLVTGVHS) is a signal peptide. An LCCL domain is found at 40 to 133 (TVPQINCDVK…LSLPRWRESF (94 aa)). 2 disulfide bridges follow: Cys-46–Cys-62 and Cys-66–Cys-86. The segment covering 154 to 168 (SSKSPAAQAGETTKA) has biased composition (polar residues). Disordered regions lie at residues 154–177 (SSKSPAAQAGETTKAYQRPPIPGT) and 199–257 (TLPR…GAAF). The segment covering 199–216 (TLPRPSPSAASTTSIPRP) has biased composition (low complexity). Residues 230–240 (STATYTSSQNR) are compositionally biased toward polar residues. 2 consecutive VWFA domains span residues 293–478 (DLSF…VKRV) and 495–668 (DIGF…IQNI). Residues Asn-390 and Asn-520 are each glycosylated (N-linked (GlcNAc...) asparagine).

In terms of assembly, binds dermatan sulfate and chondroitin sulfate.

It is found in the secreted. The protein localises to the extracellular space. It localises to the extracellular matrix. In terms of biological role, promotes matrix assembly and cell adhesiveness. Plays a role in spinal cord formation by regulating the proliferation and differentiation of neural stem cells. The chain is Vitrin (VIT) from Homo sapiens (Human).